A 298-amino-acid polypeptide reads, in one-letter code: Ethanolamine ammonia-lyase small subunit (298 aa).

The tract at residues 15-43 (ASMGQDVPQPVAPSTQEGAKPQRAAPTAT) is disordered. 3 residues coordinate adenosylcob(III)alamin: Val-210, Glu-231, and Cys-261.

The protein belongs to the EutC family. In terms of assembly, the basic unit is a heterodimer which dimerizes to form tetramers. The heterotetramers trimerize; 6 large subunits form a core ring with 6 small subunits projecting outwards. Adenosylcob(III)alamin is required as a cofactor.

Its subcellular location is the bacterial microcompartment. The enzyme catalyses ethanolamine = acetaldehyde + NH4(+). It participates in amine and polyamine degradation; ethanolamine degradation. Catalyzes the deamination of various vicinal amino-alcohols to oxo compounds. Allows this organism to utilize ethanolamine as the sole source of nitrogen and carbon in the presence of external vitamin B12. The polypeptide is Ethanolamine ammonia-lyase small subunit (Salmonella arizonae (strain ATCC BAA-731 / CDC346-86 / RSK2980)).